The sequence spans 263 residues: Phosphoinositide-3-kinase-interacting protein 1 (263 aa).

An N-terminal signal peptide occupies residues 1-21 (MLLAWVQAFLVSNMLLAEAYG). Residues 22-168 (SGGCFWDNGH…NSKEKKDLGT (147 aa)) are Extracellular-facing. One can recognise a Kringle domain in the interval 24-101 (GCFWDNGHLY…EKRPCENLSC (78 aa)). Disulfide bonds link cysteine 25-cysteine 101, cysteine 46-cysteine 82, and cysteine 70-cysteine 96. A glycan (N-linked (GlcNAc...) asparagine) is linked at asparagine 98. The helical transmembrane segment at 169–189 (LGYVLGITMMVIIVAIGAGII) threads the bilayer. Residues 190-263 (LGYSYKRGKD…LMGQAGTPGA (74 aa)) are Cytoplasmic-facing. Residues 242 to 251 (QTPVDPQEGS) are compositionally biased toward polar residues. Positions 242–263 (QTPVDPQEGSTPLMGQAGTPGA) are disordered.

Its subcellular location is the cell membrane. Functionally, negative regulator of hepatic phosphatidylinositol 3-kinase (PI3K) activity. The sequence is that of Phosphoinositide-3-kinase-interacting protein 1 (PIK3IP1) from Pongo abelii (Sumatran orangutan).